A 369-amino-acid chain; its full sequence is Cyclin-I2 (369 aa).

Positions 1-116 (MASGAQLPPQ…SRKPRNLEGD (116 aa)) are disordered. Low complexity-rich tracts occupy residues 64 to 76 (AASL…AVPV) and 83 to 101 (APAG…EQAP).

This sequence belongs to the cyclin family.

This is Cyclin-I2 (CCNI2) from Homo sapiens (Human).